Reading from the N-terminus, the 340-residue chain is Olfactory receptor 5T3 (340 aa).

Topologically, residues 1 to 55 (MDSTFTGYNLYNLQVKTEMDKLSSGLDIYRNPLKNKTEVTMFILTGFTDDFELQV) are extracellular. Asn-35 carries N-linked (GlcNAc...) asparagine glycosylation. Residues 56–76 (FLFLLFFAIYLFTLIGNLGLV) form a helical membrane-spanning segment. At 77-84 (VLVIEDSW) the chain is on the cytoplasmic side. A helical transmembrane segment spans residues 85 to 105 (LHNPMYYFLSVLSFLDACYST). The Extracellular segment spans residues 106–129 (VVTPKMLVNFLAKNKSISFIGCAT). N-linked (GlcNAc...) asparagine glycosylation is present at Asn-119. Cys-127 and Cys-219 are disulfide-bonded. The chain crosses the membrane as a helical span at residues 130–150 (QMLLFVTFGTTECFLLAAMAY). The Cytoplasmic portion of the chain corresponds to 151–169 (DHYVAIYNPLLYSVSMSPR). The helical transmembrane segment at 170–190 (VYVPLITASYVAGILHATIHI) threads the bilayer. Residues 191-226 (VATFSLSFCGSNEIRHVFCDMPPLLAISCSDTHTNQ) lie on the Extracellular side of the membrane. A helical membrane pass occupies residues 227 to 247 (LLLFYFVGSIEIVTILIVLIS). The Cytoplasmic portion of the chain corresponds to 248 to 267 (CDFILLSILKMHSAKGRQKA). A helical membrane pass occupies residues 268 to 288 (FSTCGSHLTGVTIYHGTILVS). Over 289-301 (YMRPSSSYASDHD) the chain is Extracellular. A helical transmembrane segment spans residues 302-322 (IIVSIFYTIVIPKLNPIIYSL). Residues 323–340 (RNKEVKKAVKKMLKLVYK) lie on the Cytoplasmic side of the membrane.

This sequence belongs to the G-protein coupled receptor 1 family.

The protein resides in the cell membrane. Odorant receptor. The sequence is that of Olfactory receptor 5T3 (OR5T3) from Homo sapiens (Human).